The following is a 357-amino-acid chain: Anthranilate phosphoribosyltransferase (357 aa).

5-phospho-alpha-D-ribose 1-diphosphate contacts are provided by residues glycine 94, glycine 97–aspartate 98, threonine 102, asparagine 104–threonine 107, lysine 122–serine 130, and glycine 134. Glycine 94 lines the anthranilate pocket. A Mg(2+)-binding site is contributed by serine 106. Anthranilate is bound at residue asparagine 125. Residue arginine 180 participates in anthranilate binding. Mg(2+) is bound by residues aspartate 238 and glutamate 239.

Belongs to the anthranilate phosphoribosyltransferase family. Homodimer. Requires Mg(2+) as cofactor.

It carries out the reaction N-(5-phospho-beta-D-ribosyl)anthranilate + diphosphate = 5-phospho-alpha-D-ribose 1-diphosphate + anthranilate. It participates in amino-acid biosynthesis; L-tryptophan biosynthesis; L-tryptophan from chorismate: step 2/5. In terms of biological role, catalyzes the transfer of the phosphoribosyl group of 5-phosphorylribose-1-pyrophosphate (PRPP) to anthranilate to yield N-(5'-phosphoribosyl)-anthranilate (PRA). The protein is Anthranilate phosphoribosyltransferase of Mycobacterium sp. (strain JLS).